Reading from the N-terminus, the 1367-residue chain is DNA-directed RNA polymerase subunit beta' (1367 aa).

Positions 1-34 (MTSTSPKSRKSSSKRKGSKKKAARSKNVIPPLSK) are disordered. Over residues 7-24 (KSRKSSSKRKGSKKKAAR) the composition is skewed to basic residues. Residues Cys250, Cys317, Cys324, and Cys327 each contribute to the Zn(2+) site. The interval 1306 to 1367 (SVLDDPSDAD…LQEEGLLSDE (62 aa)) is disordered. Positions 1355-1367 (LEGLQEEGLLSDE) are enriched in low complexity.

The protein belongs to the RNA polymerase beta' chain family. RpoC2 subfamily. In cyanobacteria the RNAP catalytic core is composed of 2 alpha, 1 beta, 1 beta', 1 gamma and 1 omega subunit. When a sigma factor is associated with the core the holoenzyme is formed, which can initiate transcription. The cofactor is Zn(2+).

The catalysed reaction is RNA(n) + a ribonucleoside 5'-triphosphate = RNA(n+1) + diphosphate. Its function is as follows. DNA-dependent RNA polymerase catalyzes the transcription of DNA into RNA using the four ribonucleoside triphosphates as substrates. This is DNA-directed RNA polymerase subunit beta' from Prochlorococcus marinus (strain SARG / CCMP1375 / SS120).